Here is a 347-residue protein sequence, read N- to C-terminus: Endophilin-A3 (347 aa).

A membrane-binding amphipathic helix region spans residues 1 to 21 (MSVAGLKKQFHKASQLFSEKI). The 232-residue stretch at 18–249 (SEKISGAEGT…LQMRISAASS (232 aa)) folds into the BAR domain. The interval 60–87 (PNPAYRAKLGMLNTVSKIRGQVKTTGYP) is required for dimerization upon membrane association. Residues 181-201 (EEVRQAVEKFEESKELAERSM) are a coiled coil. The interval 218–254 (FIEAALDYHRQSTEILQELQSKLQMRISAASSVPRRE) is interaction with ARC. The segment at 248 to 271 (SSVPRREYKPRPVKRSSSELNGVS) is disordered. At S265 the chain carries Phosphoserine. An SH3 domain is found at 285-344 (MDQPCCRGLYDFEPENQGELGFKEGDIITLTNQIDENWYEGMIHGESGFFPINYVEVIVP).

It belongs to the endophilin family. In terms of assembly, interacts with ARC. Interacts with DNM1, SGIP1 and SYNJ1. Interacts with the huntingtin exon 1 protein (HDEX1P) containing a glutamine repeat in the pathological range and promotes formation of insoluble polyglutamine-containing aggregates in vivo. Interacts with DYDC1. Interacts with FASLG. Interacts with ATXN2. Interacts with BIN2. Brain and testis.

It is found in the cytoplasm. Its subcellular location is the early endosome membrane. Implicated in endocytosis. May recruit other proteins to membranes with high curvature. The sequence is that of Endophilin-A3 (SH3GL3) from Homo sapiens (Human).